A 267-amino-acid chain; its full sequence is 27 kDa core protein (267 aa).

The protein belongs to the chordopoxvirinae D3 family.

The protein localises to the virion. Late protein which is part of a large complex required for early virion morphogenesis. This complex participates in the formation of virosomes and the incorporation of virosomal contents into nascent immature virions. This is 27 kDa core protein from Canarypox virus (CNPV).